Consider the following 202-residue polypeptide: Homeobox protein ceh-13 (202 aa).

Disordered stretches follow at residues 60–83 and 166–202; these read PATA…LPTG and RMKE…KNFK. The span at 63 to 81 shows a compositional bias: low complexity; sequence ASGLSPPASRSSNSSAELP. Residues 114–173 constitute a DNA-binding region (homeobox); that stretch reads NGTNRTNFTTHQLTELEKEFHTAKYVNRTRRTEIASNLKLQEAQVKIWFQNRRMKEKKRE. Polar residues predominate over residues 183-194; the sequence is TWESNSPTSSCS.

It localises to the nucleus. The sequence is that of Homeobox protein ceh-13 (ceh-13) from Caenorhabditis elegans.